The following is a 56-amino-acid chain: TauPI-stichotoxin-Hcr2d (56 aa).

The 51-residue stretch at 4–54 (CLEPKVVGPCTAYFPRFYFNSETGKCTPFIYGGCEGNGNNFETLRACRGIC) folds into the BPTI/Kunitz inhibitor domain. Cystine bridges form between Cys4/Cys54, Cys13/Cys37, and Cys29/Cys50.

Belongs to the venom Kunitz-type family. Sea anemone type 2 potassium channel toxin subfamily.

It is found in the secreted. Its subcellular location is the nematocyst. This protease inhibitor shows two different activities, it inhibits both the capsaicin receptor TRPV1 and serine proteases. It partially blocks the capsaicin- and acid-induced response of TRPV1, a receptor of the pain pathway. It also weakly inhibits trypsin and chymotrypsin activity (Ki=0.5 uM and Ki=7 uM, respectively). In addition, it may also alter tachykinin levels by suppressing endogenous proteases. In vivo, it shows antinociceptive and analgesic activities. It significantly prolongs paw withdrawal latency and blocks heat-induced and chemical-induced acute pain. In addition, it also shows anti-inflammatory and analgesic effects in models of osteoarthritis and rheumatoid arthritis. In vivo, unlike other TRPV1 antagonists whose activity is associated with hyperthermia, this protein has the remarkable feature of dropping core body temperature. The polypeptide is TauPI-stichotoxin-Hcr2d (Radianthus crispa (Leathery sea anemone)).